Consider the following 149-residue polypeptide: Ribonuclease P protein component (149 aa).

The disordered stretch occupies residues 123 to 149 (GTKVSRRSNGALHDAAPSSQPDPTVSG). Polar residues predominate over residues 139–149 (PSSQPDPTVSG).

Belongs to the RnpA family. As to quaternary structure, consists of a catalytic RNA component (M1 or rnpB) and a protein subunit.

It catalyses the reaction Endonucleolytic cleavage of RNA, removing 5'-extranucleotides from tRNA precursor.. Its function is as follows. RNaseP catalyzes the removal of the 5'-leader sequence from pre-tRNA to produce the mature 5'-terminus. It can also cleave other RNA substrates such as 4.5S RNA. The protein component plays an auxiliary but essential role in vivo by binding to the 5'-leader sequence and broadening the substrate specificity of the ribozyme. The sequence is that of Ribonuclease P protein component from Caulobacter vibrioides (strain ATCC 19089 / CIP 103742 / CB 15) (Caulobacter crescentus).